Here is a 116-residue protein sequence, read N- to C-terminus: Alpha-defensin 29 (116 aa).

The first 19 residues, 1–19 (MKTLVLLSALVLPCFQVQA), serve as a signal peptide directing secretion. Positions 20-60 (DPIQNTDEETKTEEQPEEEDQAVSVSFGGTEGSALQDVAQR) are excised as a propeptide. The tract at residues 22–44 (IQNTDEETKTEEQPEEEDQAVSV) is disordered. A run of 9 repeats spans residues 65 to 67 (CRK), 68 to 70 (CRV), 71 to 73 (CQK), 74 to 76 (CQV), 77 to 79 (CQK), 80 to 82 (CPV), 83 to 85 (CPT), 86 to 88 (CPQ), and 89 to 91 (CPK). The 2 X 3 AA tandem repeats of C-R-X stretch occupies residues 65–70 (CRKCRV). The 3 X 3 AA tandem repeats of C-Q-X stretch occupies residues 71–79 (CQKCQVCQK). The interval 80 to 91 (CPVCPTCPQCPK) is 4 X 3 AA tandem repeats of C-P-X.

This sequence belongs to the alpha-defensin family. In terms of tissue distribution, small bowel.

Its subcellular location is the secreted. Apparent precursor of a secreted, cationic, proline- and cysteine-rich peptide that contains Cys-Pro-Xaa repeats. Unlike cryptdin, the proposed mature peptide region lacks the structural motif characteristic of defensins. This is Alpha-defensin 29 from Mus musculus (Mouse).